Here is a 118-residue protein sequence, read N- to C-terminus: Large ribosomal subunit protein bL20 (118 aa).

Belongs to the bacterial ribosomal protein bL20 family.

Its function is as follows. Binds directly to 23S ribosomal RNA and is necessary for the in vitro assembly process of the 50S ribosomal subunit. It is not involved in the protein synthesizing functions of that subunit. This chain is Large ribosomal subunit protein bL20, found in Synechococcus sp. (strain JA-2-3B'a(2-13)) (Cyanobacteria bacterium Yellowstone B-Prime).